Consider the following 210-residue polypeptide: ATP-dependent Clp protease proteolytic subunit (210 aa).

Catalysis depends on serine 107, which acts as the Nucleophile. Histidine 132 is an active-site residue.

This sequence belongs to the peptidase S14 family. As to quaternary structure, fourteen ClpP subunits assemble into 2 heptameric rings which stack back to back to give a disk-like structure with a central cavity, resembling the structure of eukaryotic proteasomes.

The protein resides in the cytoplasm. It carries out the reaction Hydrolysis of proteins to small peptides in the presence of ATP and magnesium. alpha-casein is the usual test substrate. In the absence of ATP, only oligopeptides shorter than five residues are hydrolyzed (such as succinyl-Leu-Tyr-|-NHMec, and Leu-Tyr-Leu-|-Tyr-Trp, in which cleavage of the -Tyr-|-Leu- and -Tyr-|-Trp bonds also occurs).. Cleaves peptides in various proteins in a process that requires ATP hydrolysis. Has a chymotrypsin-like activity. Plays a major role in the degradation of misfolded proteins. The polypeptide is ATP-dependent Clp protease proteolytic subunit (Cereibacter sphaeroides (strain ATCC 17025 / ATH 2.4.3) (Rhodobacter sphaeroides)).